The sequence spans 393 residues: F-box protein KIB4 (393 aa).

An F-box domain is found at 12-59 (AKQPILVLDLVRLVLERLSFVDFHRARCVSSVWYSASKSCIGGTNPTA).

It is found in the cytoplasm. It localises to the nucleus. The protein resides in the nucleolus. In terms of biological role, component of SCF(ASK-cullin-F-box) E3 ubiquitin ligase complexes, which may mediate the ubiquitination and subsequent proteasomal degradation of target proteins. Required for brassinosteroid (BR) signal transduction. Mediates ASK7/BIN2/SK21 inactivation both by competing with substrate binding (e.g. BZR1) and by promoting its ubiquitination and subsequent proteasomal degradation. The protein is F-box protein KIB4 of Arabidopsis thaliana (Mouse-ear cress).